The primary structure comprises 478 residues: Sulfate adenylyltransferase subunit 1 (478 aa).

Residues 28–244 (KTMLRFLTCG…LESVDVVNAR (217 aa)) form the tr-type G domain. The G1 stretch occupies residues 37–44 (GSVDDGKS). Residue 37-44 (GSVDDGKS) coordinates GTP. Residues 95 to 99 (GITID) are G2. The interval 116–119 (DTPG) is G3. Residues 116-120 (DTPGH) and 171-174 (NKMD) each bind GTP. The tract at residues 171 to 174 (NKMD) is G4. The G5 stretch occupies residues 209-211 (SAL).

It belongs to the TRAFAC class translation factor GTPase superfamily. Classic translation factor GTPase family. CysN/NodQ subfamily. In terms of assembly, heterodimer composed of CysD, the smaller subunit, and CysN.

The enzyme catalyses sulfate + ATP + H(+) = adenosine 5'-phosphosulfate + diphosphate. It functions in the pathway sulfur metabolism; hydrogen sulfide biosynthesis; sulfite from sulfate: step 1/3. In terms of biological role, with CysD forms the ATP sulfurylase (ATPS) that catalyzes the adenylation of sulfate producing adenosine 5'-phosphosulfate (APS) and diphosphate, the first enzymatic step in sulfur assimilation pathway. APS synthesis involves the formation of a high-energy phosphoric-sulfuric acid anhydride bond driven by GTP hydrolysis by CysN coupled to ATP hydrolysis by CysD. The sequence is that of Sulfate adenylyltransferase subunit 1 from Yersinia pseudotuberculosis serotype O:1b (strain IP 31758).